The following is a 239-amino-acid chain: Ribosomal RNA large subunit methyltransferase E (239 aa).

Residues 1–20 (MTKAPIAGNRTGRKLGQRVK) are disordered. Residues 11–20 (TGRKLGQRVK) are compositionally biased toward basic residues. Residues glycine 81, tryptophan 83, aspartate 104, aspartate 120, and aspartate 144 each coordinate S-adenosyl-L-methionine. Lysine 184 (proton acceptor) is an active-site residue.

It belongs to the class I-like SAM-binding methyltransferase superfamily. RNA methyltransferase RlmE family.

Its subcellular location is the cytoplasm. The enzyme catalyses uridine(2552) in 23S rRNA + S-adenosyl-L-methionine = 2'-O-methyluridine(2552) in 23S rRNA + S-adenosyl-L-homocysteine + H(+). Functionally, specifically methylates the uridine in position 2552 of 23S rRNA at the 2'-O position of the ribose in the fully assembled 50S ribosomal subunit. The chain is Ribosomal RNA large subunit methyltransferase E from Rhizobium leguminosarum bv. trifolii (strain WSM2304).